The chain runs to 115 residues: U3-lycotoxin-Ls1f (115 aa).

A signal peptide spans 1–20 (MKFVLLFGVLLVTLFSYSSA). Residues 21–44 (EMLDDFDQADEDELLSLIEKEEAR) constitute a propeptide that is removed on maturation. 4 disulfide bridges follow: cysteine 48–cysteine 63, cysteine 55–cysteine 72, cysteine 62–cysteine 87, and cysteine 74–cysteine 85.

It belongs to the neurotoxin 19 (CSTX) family. 01 subfamily. As to expression, expressed by the venom gland.

The protein resides in the secreted. The chain is U3-lycotoxin-Ls1f from Lycosa singoriensis (Wolf spider).